A 58-amino-acid polypeptide reads, in one-letter code: Mu-diguetoxin-Dc1b (58 aa).

Intrachain disulfides connect C12–C26, C20–C40, C25–C54, and C42–C52.

Belongs to the neurotoxin 26 (DTX) family. In terms of tissue distribution, expressed by the venom gland.

Its subcellular location is the secreted. Acts by delaying the inactivation of presynaptic voltage-sensitive sodium channels (Nav). Acts against insects and cause a progressive spastic paralysis. This Diguetia canities (Desert bush spider) protein is Mu-diguetoxin-Dc1b.